A 160-amino-acid chain; its full sequence is tRNA (cytidine(56)-2'-O)-methyltransferase (160 aa).

S-adenosyl-L-methionine is bound by residues L68, 94 to 98, and 112 to 119; these read GAEKV and IGNQPHSE.

Belongs to the aTrm56 family. Homodimer.

The protein localises to the cytoplasm. It catalyses the reaction cytidine(56) in tRNA + S-adenosyl-L-methionine = 2'-O-methylcytidine(56) in tRNA + S-adenosyl-L-homocysteine + H(+). In terms of biological role, specifically catalyzes the AdoMet-dependent 2'-O-ribose methylation of cytidine at position 56 in tRNAs. This chain is tRNA (cytidine(56)-2'-O)-methyltransferase, found in Saccharolobus solfataricus (strain ATCC 35092 / DSM 1617 / JCM 11322 / P2) (Sulfolobus solfataricus).